Here is a 111-residue protein sequence, read N- to C-terminus: Universal stress protein B (111 aa).

Residues 1 to 21 (MISTVSLFWALCVVCIVNMAR) traverse the membrane as a helical segment. At 22 to 89 (YFSSLRALLV…IRRCERVRRQ (68 aa)) the chain is on the cytoplasmic side. A helical membrane pass occupies residues 90–110 (FLLTSALCGLVVVSLIALMIW). Residue His111 is a topological domain, periplasmic.

Belongs to the universal stress protein B family.

It localises to the cell inner membrane. The chain is Universal stress protein B (uspB) from Salmonella choleraesuis (strain SC-B67).